Here is a 209-residue protein sequence, read N- to C-terminus: Claudin-like protein ZF-A9 (209 aa).

A run of 4 helical transmembrane segments spans residues 8 to 28 (LGTT…AIPL), 81 to 101 (AILV…FAGG), 114 to 134 (ALVA…GLVP), and 159 to 179 (FGAA…GGGL). A disordered region spans residues 187 to 209 (GRTSSRGRYTPASQNGRERSEYV). Residues 188–201 (RTSSRGRYTPASQN) show a composition bias toward polar residues.

The protein belongs to the claudin family.

Its subcellular location is the cell membrane. The protein localises to the cell junction. The protein resides in the tight junction. Functionally, component of tight junction (TJ) strands. This Danio rerio (Zebrafish) protein is Claudin-like protein ZF-A9 (cldng).